The following is a 513-amino-acid chain: Aspartic proteinase A2 (513 aa).

An N-terminal signal peptide occupies residues 1–24 (MGVYSRAVAFSVFVSFLLFFTAYS). Residues 25 to 71 (KRNDGTFRVGLKKLKLDPNNRLATRFGSKQEEALRSSLRSYNNNLGG) constitute a propeptide, activation peptide. One can recognise a Peptidase A1 domain in the interval 89-510 (YYGEIAIGTP…DFGNEQVGFA (422 aa)). Residue Asp-107 is part of the active site. 2 disulfide bridges follow: Cys-120-Cys-126 and Cys-285-Cys-289. Asp-294 is a catalytic residue. The 106-residue stretch at 319–424 (VVSQQCKTVV…NEICERMPSP (106 aa)) folds into the Saposin B-type domain. Intrachain disulfides connect Cys-324/Cys-418, Cys-349/Cys-390, Cys-355/Cys-387, and Cys-432/Cys-469. A glycan (N-linked (GlcNAc...) asparagine) is linked at Asn-404.

The protein belongs to the peptidase A1 family. In terms of tissue distribution, expressed in seed pods and dry seeds.

The protein resides in the vacuole. Involved in the breakdown of propeptides of storage proteins in protein-storage vacuoles. This chain is Aspartic proteinase A2 (APA2), found in Arabidopsis thaliana (Mouse-ear cress).